The following is a 288-amino-acid chain: Bifunctional protein FolD (288 aa).

Residues 166 to 168 (GAS) and Ile232 contribute to the NADP(+) site.

It belongs to the tetrahydrofolate dehydrogenase/cyclohydrolase family. As to quaternary structure, homodimer.

It carries out the reaction (6R)-5,10-methylene-5,6,7,8-tetrahydrofolate + NADP(+) = (6R)-5,10-methenyltetrahydrofolate + NADPH. The enzyme catalyses (6R)-5,10-methenyltetrahydrofolate + H2O = (6R)-10-formyltetrahydrofolate + H(+). It functions in the pathway one-carbon metabolism; tetrahydrofolate interconversion. Functionally, catalyzes the oxidation of 5,10-methylenetetrahydrofolate to 5,10-methenyltetrahydrofolate and then the hydrolysis of 5,10-methenyltetrahydrofolate to 10-formyltetrahydrofolate. The chain is Bifunctional protein FolD from Yersinia pseudotuberculosis serotype O:1b (strain IP 31758).